The following is a 993-amino-acid chain: UPF0182 protein MAV_4137 (993 aa).

7 helical membrane passes run 18-38 (ILIL…RLID), 63-83 (FVVF…GLAV), 113-133 (LVSI…AQSY), 175-195 (FVAV…FGGI), 210-230 (IQLV…YWLD), 254-274 (AVLP…AAVF), and 287-307 (IGLV…PLIV). Positions 903–941 (NIQPTEGGAPAASPPANAPAPAVTPGSAPPVAAPPVPDG) are disordered. The segment covering 929-939 (SAPPVAAPPVP) has biased composition (pro residues).

This sequence belongs to the UPF0182 family.

Its subcellular location is the cell membrane. The sequence is that of UPF0182 protein MAV_4137 from Mycobacterium avium (strain 104).